A 1031-amino-acid chain; its full sequence is Probable ATP-dependent RNA helicase DDX46 (1031 aa).

Over residues 1-24 (MGRESRHYRKRSASRGRSGSRSRS) the composition is skewed to basic residues. The tract at residues 1–228 (MGRESRHYRK…EMEGEELDPL (228 aa)) is disordered. Residue Gly2 is the site of N-myristoyl glycine attachment. Basic and acidic residues predominate over residues 26 to 49 (SPSDKRSKRGDDRRSRSRDRDRRR). Basic residues-rich tracts occupy residues 50 to 73 (ERSR…RSRS) and 81 to 103 (ERRR…RRSR). Positions 112 to 200 (KKTENRSRSK…EMKQGKKWSL (89 aa)) are enriched in basic and acidic residues. A coiled-coil region spans residues 152–197 (DQNKLEEEMRKRKERVEKWREEQRKKAMENIGELKKEIEEMKQGKK). Lys186 is covalently cross-linked (Glycyl lysine isopeptide (Lys-Gly) (interchain with G-Cter in SUMO2)). Ser199 bears the Phosphoserine mark. Acidic residues-rich tracts occupy residues 201–211 (EDDDDDEDDPA) and 219–228 (EMEGEELDPL). Position 263 is an N6-acetyllysine (Lys263). The residue at position 294 (Tyr294) is a Phosphotyrosine. Phosphoserine is present on residues Ser295 and Ser296. A Glycyl lysine isopeptide (Lys-Gly) (interchain with G-Cter in SUMO2) cross-link involves residue Lys325. The residue at position 346 (Ser346) is a Phosphoserine. Positions 372–400 (KSWVQCGISMKILNSLKKHGYEKPTPIQT) match the Q motif motif. The Helicase ATP-binding domain occupies 403-581 (IPAIMSGRDL…RRILSKPIEV (179 aa)). 416 to 423 (AKTGSGKT) is a binding site for ATP. A DEAD box motif is present at residues 529-532 (DEAD). Residues 592–753 (DVEQQVIVIE…AVPPDLEKLW (162 aa)) enclose the Helicase C-terminal domain. N6-acetyllysine is present on Lys776. A Glycyl lysine isopeptide (Lys-Gly) (interchain with G-Cter in SUMO2) cross-link involves residue Lys779. Residue Ser804 is modified to Phosphoserine. Lys903 is subject to N6-acetyllysine. Residues Lys907 and Lys915 each participate in a glycyl lysine isopeptide (Lys-Gly) (interchain with G-Cter in SUMO2) cross-link. Ser928 is modified (phosphoserine).

This sequence belongs to the DEAD box helicase family. DDX46/PRP5 subfamily. As to quaternary structure, component of the 17S U2 SnRNP complex, a ribonucleoprotein complex that contains small nuclear RNA (snRNA) U2 and a number of specific proteins. Within the 17S U2 SnRNP complex, DDX46 is part of the SF3B subcomplex, which is required for 'A' complex assembly formed by the stable binding of U2 snRNP to the branchpoint sequence in pre-mRNA. Recruited to the 17S U2 SnRNP complex following release of DDX42; DDX42 and DDX46 bind the SF3B subcomplex in a competitive manner.

The protein localises to the nucleus speckle. It is found in the nucleus. It localises to the cajal body. The catalysed reaction is ATP + H2O = ADP + phosphate + H(+). Functionally, component of the 17S U2 SnRNP complex of the spliceosome, a large ribonucleoprotein complex that removes introns from transcribed pre-mRNAs. The 17S U2 SnRNP complex (1) directly participates in early spliceosome assembly and (2) mediates recognition of the intron branch site during pre-mRNA splicing by promoting the selection of the pre-mRNA branch-site adenosine, the nucleophile for the first step of splicing. Within the 17S U2 SnRNP complex, DDX46 plays essential roles during assembly of pre-spliceosome and proofreading of the branch site. In Homo sapiens (Human), this protein is Probable ATP-dependent RNA helicase DDX46.